A 202-amino-acid chain; its full sequence is UPF0301 protein mlr7511 (202 aa).

It belongs to the UPF0301 (AlgH) family.

This Mesorhizobium japonicum (strain LMG 29417 / CECT 9101 / MAFF 303099) (Mesorhizobium loti (strain MAFF 303099)) protein is UPF0301 protein mlr7511.